Here is a 156-residue protein sequence, read N- to C-terminus: ATP synthase subunit b (156 aa).

A helical membrane pass occupies residues 7–29; that stretch reads LFAQMVVFLVLAWFTMKFVWPPL.

Belongs to the ATPase B chain family. F-type ATPases have 2 components, F(1) - the catalytic core - and F(0) - the membrane proton channel. F(1) has five subunits: alpha(3), beta(3), gamma(1), delta(1), epsilon(1). F(0) has three main subunits: a(1), b(2) and c(10-14). The alpha and beta chains form an alternating ring which encloses part of the gamma chain. F(1) is attached to F(0) by a central stalk formed by the gamma and epsilon chains, while a peripheral stalk is formed by the delta and b chains.

The protein localises to the cell inner membrane. F(1)F(0) ATP synthase produces ATP from ADP in the presence of a proton or sodium gradient. F-type ATPases consist of two structural domains, F(1) containing the extramembraneous catalytic core and F(0) containing the membrane proton channel, linked together by a central stalk and a peripheral stalk. During catalysis, ATP synthesis in the catalytic domain of F(1) is coupled via a rotary mechanism of the central stalk subunits to proton translocation. Functionally, component of the F(0) channel, it forms part of the peripheral stalk, linking F(1) to F(0). The chain is ATP synthase subunit b from Burkholderia vietnamiensis (strain G4 / LMG 22486) (Burkholderia cepacia (strain R1808)).